Here is a 374-residue protein sequence, read N- to C-terminus: Palmitoyltransferase PFA5 (374 aa).

At Met1 to Ser13 the chain is on the cytoplasmic side. Residues Trp14–Tyr34 form a helical membrane-spanning segment. At Cys35–Gly55 the chain is on the lumenal side. Residues Leu56–Ile76 form a helical membrane-spanning segment. Residues Leu77–Leu173 lie on the Cytoplasmic side of the membrane. One can recognise a DHHC domain in the interval Ile129 to Ala179. The chain crosses the membrane as a helical span at residues Phe174–Val194. Over Tyr195–Thr217 the chain is Lumenal. The chain crosses the membrane as a helical span at residues Leu218 to Tyr238. Residues Met239 to Tyr374 lie on the Cytoplasmic side of the membrane.

The protein belongs to the DHHC palmitoyltransferase family. PFA5 subfamily. Post-translationally, autopalmitoylated.

It is found in the membrane. The enzyme catalyses L-cysteinyl-[protein] + hexadecanoyl-CoA = S-hexadecanoyl-L-cysteinyl-[protein] + CoA. The protein is Palmitoyltransferase PFA5 (PFA5) of Saccharomyces cerevisiae (strain ATCC 204508 / S288c) (Baker's yeast).